Consider the following 215-residue polypeptide: Probable transaldolase (215 aa).

The Schiff-base intermediate with substrate role is filled by Lys-83.

It belongs to the transaldolase family. Type 3B subfamily.

It is found in the cytoplasm. It carries out the reaction D-sedoheptulose 7-phosphate + D-glyceraldehyde 3-phosphate = D-erythrose 4-phosphate + beta-D-fructose 6-phosphate. It participates in carbohydrate degradation; pentose phosphate pathway; D-glyceraldehyde 3-phosphate and beta-D-fructose 6-phosphate from D-ribose 5-phosphate and D-xylulose 5-phosphate (non-oxidative stage): step 2/3. Its function is as follows. Transaldolase is important for the balance of metabolites in the pentose-phosphate pathway. This is Probable transaldolase from Methanococcus maripaludis (strain C7 / ATCC BAA-1331).